The following is a 519-amino-acid chain: Transcription factor STP1 (519 aa).

Residues 16–35 form an i region; that stretch reads IPGKIYAFFRELVSGVIISK. Basic and acidic residues predominate over residues 47–61; sequence ATKEEGKDAADEEKT. Disordered regions lie at residues 47-69 and 115-150; these read ATKE…FPES and LLGS…EHST. The tract at residues 65–97 is II; the sequence is LFPESNNIDRSLNGGCSVIPCSMDVSDLNTPIS. The span at 131-146 shows a compositional bias: low complexity; the sequence is STGVTSSPLSPSGSTP. The C2H2-type 1 zinc-finger motif lies at 160–182; sequence FICHYCDATFRIRGYLTRHIKKH. The segment at 188–223 adopts a C2H2-type 2; atypical zinc-finger fold; the sequence is YHCPFFNSATPPDLRCHNSGGFSRRDTYKTHLKARH. The segment at 240-265 adopts a C2H2-type 3; atypical zinc-finger fold; that stretch reads GHCAQCGEYFSTIENFVENHIESGDC. The disordered stretch occupies residues 357–382; that stretch reads IKKKQQQVSGSTVTTPEVATQNNQEV. A compositionally biased stretch (polar residues) spans 364 to 381; it reads VSGSTVTTPEVATQNNQE.

In terms of assembly, interacts (via Region II) with SSY5; protease component of the SPS-sensor. Post-translationally, phosphorylated by casein kinase I. Phosphorylation is not dependent on the extracellular amino acid levels, but is a prerequisite for proteolytic processing. In terms of processing, activated by the amino acid-induced proteolytic removal of an N-terminal inhibitory domain by serine protease SSY5, an intrinsic component of the SPS-sensor. Processing requires at least 2 components of the SCF(GRR1) ubiquitin ligase complex, namely the F-box protein GRR1 and the E2 enzyme CDC34, but does not depend on the proteasome. Processing is negatively regulated by the protein phosphatase 2A regulatory subunit RTS1.

The protein localises to the cell membrane. The protein resides in the nucleus. Its function is as follows. Transcription factor involved in the regulation of gene expression in response to extracellular amino acid levels. Synthesized as latent cytoplasmic precursor, which, upon a signal initiated by the plasma membrane SPS (SSY1-PTR3-SSY5) amino acid sensor system, becomes proteolytically activated and relocates to the nucleus, where it induces the expression of SPS-sensor-regulated genes, including the amino-acid permeases AGP1, BAP2, BAP3 and GNP1. Binding to promoters is facilitated by DAL81. Involved in the repression of genes subject to nitrogen catabolite repression and genes involved in stress response. Negatively regulated by inner nuclear membrane proteins ASI1, ASI2 and ASI3, which prevent unprocessed precursor forms that escape cytoplasmic anchoring from inducing SPS-sensor-regulated genes. May be involved in pre-tRNA splicing. This chain is Transcription factor STP1 (STP1), found in Saccharomyces cerevisiae (strain RM11-1a) (Baker's yeast).